The sequence spans 299 residues: 4-hydroxybenzoate octaprenyltransferase (299 aa).

7 helical membrane-spanning segments follow: residues 31-51, 54-74, 105-125, 148-168, 177-197, 241-261, and 277-297; these read IGIYLVLWPTLWSLWIAADGL, WDVLVIFVLGVVLMRSAGCVI, VLFFVALLVIAFILVLFTNPL, QLPQIVLGAAFAWSIPMAFAA, IWVLYTAVVLWTVAYDTFYAM, FGLGFSFKVSLLVAGGLFAYQ, and FLHNNWVGLVVFLGILVDKLI.

Belongs to the UbiA prenyltransferase family. The cofactor is Mg(2+).

The protein resides in the cell inner membrane. It carries out the reaction all-trans-octaprenyl diphosphate + 4-hydroxybenzoate = 4-hydroxy-3-(all-trans-octaprenyl)benzoate + diphosphate. The protein operates within cofactor biosynthesis; ubiquinone biosynthesis. In terms of biological role, catalyzes the prenylation of para-hydroxybenzoate (PHB) with an all-trans polyprenyl group. Mediates the second step in the final reaction sequence of ubiquinone-8 (UQ-8) biosynthesis, which is the condensation of the polyisoprenoid side chain with PHB, generating the first membrane-bound Q intermediate 3-octaprenyl-4-hydroxybenzoate. This chain is 4-hydroxybenzoate octaprenyltransferase, found in Saccharophagus degradans (strain 2-40 / ATCC 43961 / DSM 17024).